Consider the following 77-residue polypeptide: Tautomerase PptA (77 aa).

Residue Pro-2 is the Proton acceptor; via imino nitrogen of the active site.

Belongs to the 4-oxalocrotonate tautomerase family. PptA subfamily. In terms of assembly, homodimer.

The protein localises to the cytoplasm. This chain is Tautomerase PptA, found in Escherichia coli (strain K12 / MC4100 / BW2952).